The primary structure comprises 301 residues: GTPase Era (301 aa).

The 170-residue stretch at 4–173 folds into the Era-type G domain; that stretch reads KAGFVALIGK…LECISQHLSP (170 aa). Residues 12 to 19 form a G1 region; that stretch reads GKPNAGKS. 12 to 19 is a binding site for GTP; sequence GKPNAGKS. Positions 38-42 are G2; it reads NATRK. The interval 64 to 67 is G3; the sequence is DTPG. Residues 64-68 and 122-125 each bind GTP; these read DTPGL and SKID. Positions 122–125 are G4; the sequence is SKID. The G5 stretch occupies residues 152–154; it reads LSA. In terms of domain architecture, KH type-2 spans 204–280; sequence LSDEIPYESD…FLNLQVIAQK (77 aa).

It belongs to the TRAFAC class TrmE-Era-EngA-EngB-Septin-like GTPase superfamily. Era GTPase family. As to quaternary structure, monomer.

It is found in the cytoplasm. The protein resides in the cell inner membrane. An essential GTPase that binds both GDP and GTP, with rapid nucleotide exchange. Plays a role in 16S rRNA processing and 30S ribosomal subunit biogenesis and possibly also in cell cycle regulation and energy metabolism. The protein is GTPase Era of Helicobacter pylori (strain ATCC 700392 / 26695) (Campylobacter pylori).